Consider the following 344-residue polypeptide: Anthranilate phosphoribosyltransferase (344 aa).

5-phospho-alpha-D-ribose 1-diphosphate-binding positions include Gly81, 84–85 (GD), Ser89, 91–94 (NIST), 109–117 (KHGNRALSS), and Ala121. Gly81 serves as a coordination point for anthranilate. Ser93 contributes to the Mg(2+) binding site. Asn112 contacts anthranilate. Arg167 is a binding site for anthranilate. Mg(2+)-binding residues include Asp226 and Glu227.

The protein belongs to the anthranilate phosphoribosyltransferase family. Homodimer. Mg(2+) serves as cofactor.

The catalysed reaction is N-(5-phospho-beta-D-ribosyl)anthranilate + diphosphate = 5-phospho-alpha-D-ribose 1-diphosphate + anthranilate. Its pathway is amino-acid biosynthesis; L-tryptophan biosynthesis; L-tryptophan from chorismate: step 2/5. Catalyzes the transfer of the phosphoribosyl group of 5-phosphorylribose-1-pyrophosphate (PRPP) to anthranilate to yield N-(5'-phosphoribosyl)-anthranilate (PRA). In Azorhizobium caulinodans (strain ATCC 43989 / DSM 5975 / JCM 20966 / LMG 6465 / NBRC 14845 / NCIMB 13405 / ORS 571), this protein is Anthranilate phosphoribosyltransferase.